A 411-amino-acid chain; its full sequence is MMP alpha-(1-&gt;4)-mannosyltransferase (411 aa).

Belongs to the glycosyltransferase group 1 family. Glycosyltransferase 4 subfamily.

It carries out the reaction [3-O-methyl-alpha-D-mannosyl-(1-&gt;4)](n)-3-O-methyl-D-mannose + GDP-alpha-D-mannose = alpha-D-mannosyl-(1-&gt;4)-[3-O-methyl-alpha-D-mannosyl-(1-&gt;4)](n)-3-O-methyl-D-mannose + GDP + H(+). It catalyses the reaction [3-O-methyl-alpha-D-mannosyl-(1-&gt;4)](n)-1-O,3-O-dimethyl-alpha-D-mannose + GDP-alpha-D-mannose = alpha-D-mannosyl-(1-&gt;4)-[3-O-methyl-alpha-D-mannosyl-(1-&gt;4)](n)-1-O,3-O-dimethyl-alpha-D-mannose + GDP + H(+). With respect to regulation, activity is significantly enhanced in the presence of Mg(2+). In terms of biological role, glycosyltransferase involved in the biosynthesis of 3-O-methylmannose polysaccharides (MMP), which are intracellular polymethylated polysaccharides implicated in the modulation of fatty acid metabolism in non-tuberculous mycobacteria. Highly specific alpha-(1-&gt;4)-mannosyltransferase that can transfer mannose units from GDP-mannose to a wide range of alpha-(1-&gt;4) oligomannosides longer than three mannoses, including all hydrolytic products of MmpH. Can use synthetic trimannosides and tetramannosides as substrates, but not mono- and disaccharides, and is significantly more active with the methylated substrates, preferring the tetramannosides over the trimannosides. This Mycolicibacterium hassiacum (strain DSM 44199 / CIP 105218 / JCM 12690 / 3849) (Mycobacterium hassiacum) protein is MMP alpha-(1-&gt;4)-mannosyltransferase.